The following is a 309-amino-acid chain: Taste receptor type 2 member 114 (309 aa).

The Extracellular portion of the chain corresponds to 1 to 7 (MLSTMEG). A helical membrane pass occupies residues 8–28 (VLLSVSTSEAVLGIVGNTFIA). Topologically, residues 29–43 (LVNCMDYNRNKKLSN) are cytoplasmic. Residues 44-64 (IGFILTGLAISRICLVLILIT) traverse the membrane as a helical segment. Residues 65–87 (EAYIKIFYPQLLSPVNIIELISY) are Extracellular-facing. A helical transmembrane segment spans residues 88–108 (LWIIICQLNVWFATSLSIFYF). At 109–127 (LKIANFSHYIFVWLKRRID) the chain is on the cytoplasmic side. Residues 128 to 148 (LVFFFLIGCLLISWLFSFPVV) traverse the membrane as a helical segment. At 149–182 (AKMVKDNKMLYINTSWQIHMKKSELIINYVFTNG) the chain is on the extracellular side. Residue Asn161 is glycosylated (N-linked (GlcNAc...) asparagine). Residues 183 to 203 (GVFLFFMIMLIVCFLLIISLW) traverse the membrane as a helical segment. Residues 204 to 233 (RHRRQMESNKLGFRDLNTEVHVRTIKVLLS) are Cytoplasmic-facing. The chain crosses the membrane as a helical span at residues 234–254 (FIILFILHFMGITINVICLLI). Over 255-259 (PESNL) the chain is Extracellular. The chain crosses the membrane as a helical span at residues 260–280 (LFMFGLTTAFIYPGCHSLILI). Topologically, residues 281 to 309 (LANSRLKQCSVMILQLLKCCENGKELRDT) are cytoplasmic.

It belongs to the G-protein coupled receptor T2R family.

The protein localises to the membrane. Its function is as follows. Putative taste receptor which may play a role in the perception of bitterness. The sequence is that of Taste receptor type 2 member 114 from Mus musculus (Mouse).